The chain runs to 390 residues: Flagellar P-ring protein (390 aa).

Positions 1-25 (MLLKKIFLTGIIVLDLVFFVSYGFA) are cleaved as a signal peptide.

This sequence belongs to the FlgI family. In terms of assembly, the basal body constitutes a major portion of the flagellar organelle and consists of four rings (L,P,S, and M) mounted on a central rod.

The protein resides in the periplasm. The protein localises to the bacterial flagellum basal body. In terms of biological role, assembles around the rod to form the L-ring and probably protects the motor/basal body from shearing forces during rotation. The protein is Flagellar P-ring protein of Syntrophus aciditrophicus (strain SB).